The primary structure comprises 320 residues: tRNA-cytidine(32) 2-sulfurtransferase (320 aa).

The short motif at 54-59 (SGGKDS) is the PP-loop motif element. The [4Fe-4S] cluster site is built by cysteine 129, cysteine 132, and cysteine 220.

This sequence belongs to the TtcA family. In terms of assembly, homodimer. The cofactor is Mg(2+). It depends on [4Fe-4S] cluster as a cofactor.

The protein resides in the cytoplasm. It catalyses the reaction cytidine(32) in tRNA + S-sulfanyl-L-cysteinyl-[cysteine desulfurase] + AH2 + ATP = 2-thiocytidine(32) in tRNA + L-cysteinyl-[cysteine desulfurase] + A + AMP + diphosphate + H(+). It functions in the pathway tRNA modification. Its function is as follows. Catalyzes the ATP-dependent 2-thiolation of cytidine in position 32 of tRNA, to form 2-thiocytidine (s(2)C32). The sulfur atoms are provided by the cysteine/cysteine desulfurase (IscS) system. The chain is tRNA-cytidine(32) 2-sulfurtransferase from Bordetella pertussis (strain Tohama I / ATCC BAA-589 / NCTC 13251).